The sequence spans 218 residues: Adenylate kinase (218 aa).

11–16 (GAGKGT) provides a ligand contact to ATP. The segment at 31 to 60 (STGDMFREAMANKTKVGLEAKSYIDKGNLV) is NMP. AMP is bound by residues Thr-32, Arg-37, 58–60 (NLV), 86–89 (GFPR), and Gln-93. Residues 127–165 (ARYMCKNCGATYNKLSKQPKVEGTCDRCGSHEFYQREDD) form an LID region. Arg-128 provides a ligand contact to ATP. 2 residues coordinate Zn(2+): Cys-131 and Cys-134. 137–138 (TY) serves as a coordination point for ATP. 2 residues coordinate Zn(2+): Cys-151 and Cys-154. Residues Arg-162 and Arg-173 each coordinate AMP. Residue Gln-201 participates in ATP binding.

The protein belongs to the adenylate kinase family. As to quaternary structure, monomer.

Its subcellular location is the cytoplasm. The catalysed reaction is AMP + ATP = 2 ADP. It functions in the pathway purine metabolism; AMP biosynthesis via salvage pathway; AMP from ADP: step 1/1. In terms of biological role, catalyzes the reversible transfer of the terminal phosphate group between ATP and AMP. Plays an important role in cellular energy homeostasis and in adenine nucleotide metabolism. The sequence is that of Adenylate kinase from Lactobacillus helveticus (strain DPC 4571).